The sequence spans 288 residues: Undecaprenyl-diphosphatase (288 aa).

A run of 8 helical transmembrane segments spans residues 11-31 (LDLWQAIVLGFVQGATEFLPI), 49-69 (PGVAFTAVIQLGSIVAVLSYF), 94-114 (AQMGLGILFGTIPILIGGLLI), 129-149 (LAAIAIVSIVMGLLLGIAEQL), 159-179 (LRLADGLWMGFAQALALIPGV), 199-219 (AARFSFLLGIPAITIAGLVEL), 234-254 (VLAIGTLSSLIFSWLAIAWLL), and 265-285 (FVVYRIIFGGVILTAIATGTL).

This sequence belongs to the UppP family.

The protein localises to the cell inner membrane. The enzyme catalyses di-trans,octa-cis-undecaprenyl diphosphate + H2O = di-trans,octa-cis-undecaprenyl phosphate + phosphate + H(+). In terms of biological role, catalyzes the dephosphorylation of undecaprenyl diphosphate (UPP). Confers resistance to bacitracin. This chain is Undecaprenyl-diphosphatase, found in Synechococcus elongatus (strain ATCC 33912 / PCC 7942 / FACHB-805) (Anacystis nidulans R2).